Reading from the N-terminus, the 299-residue chain is 11-beta-hydroxysteroid dehydrogenase-like 4A (299 aa).

A helical; Signal-anchor for type II membrane protein membrane pass occupies residues 10–30 (ILLPIVTVSFLLVFMPFSIFF). Residues 54–80 (GSSS…VARR) and aspartate 105 contribute to the NADP(+) site. Substrate is bound at residue serine 184. Residue tyrosine 197 is the Proton acceptor of the active site. NADP(+)-binding positions include 197-201 (YAASK) and lysine 201.

The protein belongs to the short-chain dehydrogenases/reductases (SDR) family.

It localises to the membrane. The chain is 11-beta-hydroxysteroid dehydrogenase-like 4A (HSD4) from Arabidopsis thaliana (Mouse-ear cress).